Here is a 422-residue protein sequence, read N- to C-terminus: Testin (422 aa).

In terms of domain architecture, PET spans 92 to 199 (MILTSPVAAK…GDVKLPKEVE (108 aa)). The segment at 135-165 (QPVAGSEGAQYRKKQLAKQLPAHDQDPSKCH) is disordered. Positions 155–165 (PAHDQDPSKCH) are enriched in basic and acidic residues. LIM zinc-binding domains follow at residues 234–299 (YYCF…SEKP), 300–359 (RCAG…NHAV), and 360–422 (SCQG…KMSS).

It belongs to the prickle / espinas / testin family.

Its subcellular location is the cytoplasm. The protein resides in the cell cortex. It localises to the cell junction. It is found in the focal adhesion. Functionally, scaffold protein that may play a role in cell adhesion, cell spreading and in the reorganization of the actin cytoskeleton. May inhibit cell growth. Regulates cranial neural crest migration. Acts together with prickle1 to control axial elongation. This is Testin from Xenopus tropicalis (Western clawed frog).